A 264-amino-acid polypeptide reads, in one-letter code: Indole-3-glycerol phosphate synthase (264 aa).

It belongs to the TrpC family.

It catalyses the reaction 1-(2-carboxyphenylamino)-1-deoxy-D-ribulose 5-phosphate + H(+) = (1S,2R)-1-C-(indol-3-yl)glycerol 3-phosphate + CO2 + H2O. It participates in amino-acid biosynthesis; L-tryptophan biosynthesis; L-tryptophan from chorismate: step 4/5. The polypeptide is Indole-3-glycerol phosphate synthase (Lactococcus lactis subsp. cremoris (strain MG1363)).